The following is a 161-amino-acid chain: Phosphopantetheine adenylyltransferase (161 aa).

This sequence belongs to the eukaryotic CoaD family.

Its subcellular location is the cytoplasm. It catalyses the reaction (R)-4'-phosphopantetheine + ATP + H(+) = 3'-dephospho-CoA + diphosphate. It functions in the pathway cofactor biosynthesis; coenzyme A biosynthesis. Its function is as follows. Reversibly transfers an adenylyl group from ATP to 4'-phosphopantetheine, yielding dephospho-CoA (dPCoA) and pyrophosphate. This is Phosphopantetheine adenylyltransferase from Methanosarcina barkeri (strain Fusaro / DSM 804).